The chain runs to 198 residues: Holliday junction branch migration complex subunit RuvA (198 aa).

Positions 1-63 are domain I; it reads MIALLTGQIA…EDAIQLYGFR (63 aa). Residues 64–142 are domain II; it reads TSLEKSFFQL…KLDLSSVVVP (79 aa). Positions 143–153 are flexible linker; sequence EPRQMPEDDLL. The interval 153 to 198 is domain III; sequence LEDVVSALLNLGYKEPQVRKVLAGLNPGSDASLEGVLKQALKSLMR.

Belongs to the RuvA family. Homotetramer. Forms an RuvA(8)-RuvB(12)-Holliday junction (HJ) complex. HJ DNA is sandwiched between 2 RuvA tetramers; dsDNA enters through RuvA and exits via RuvB. An RuvB hexamer assembles on each DNA strand where it exits the tetramer. Each RuvB hexamer is contacted by two RuvA subunits (via domain III) on 2 adjacent RuvB subunits; this complex drives branch migration. In the full resolvosome a probable DNA-RuvA(4)-RuvB(12)-RuvC(2) complex forms which resolves the HJ.

It is found in the cytoplasm. In terms of biological role, the RuvA-RuvB-RuvC complex processes Holliday junction (HJ) DNA during genetic recombination and DNA repair, while the RuvA-RuvB complex plays an important role in the rescue of blocked DNA replication forks via replication fork reversal (RFR). RuvA specifically binds to HJ cruciform DNA, conferring on it an open structure. The RuvB hexamer acts as an ATP-dependent pump, pulling dsDNA into and through the RuvAB complex. HJ branch migration allows RuvC to scan DNA until it finds its consensus sequence, where it cleaves and resolves the cruciform DNA. The chain is Holliday junction branch migration complex subunit RuvA from Pelobacter propionicus (strain DSM 2379 / NBRC 103807 / OttBd1).